We begin with the raw amino-acid sequence, 144 residues long: MKSYIAKAQEVERKWYVVDAAGKPLGRVASQVASILRGKNKPTFTPNVDCGDFVIVINAEEVALTGKKLDQKMLRKHSFYPGGLKETPYREVLAKKPEFAFEEAVRRMLPKGVLGRQMLKKLKVYRGAEHDHAAQKPEVLELKY.

Belongs to the universal ribosomal protein uL13 family. As to quaternary structure, part of the 50S ribosomal subunit.

In terms of biological role, this protein is one of the early assembly proteins of the 50S ribosomal subunit, although it is not seen to bind rRNA by itself. It is important during the early stages of 50S assembly. The sequence is that of Large ribosomal subunit protein uL13 from Clostridium botulinum (strain Alaska E43 / Type E3).